Consider the following 163-residue polypeptide: Fatty acid-binding protein homolog (163 aa).

Positions 1-23 are cleaved as a signal peptide; sequence MRCLVALILTVLIVTPEVEAKTL.

The protein belongs to the calycin superfamily. Fatty-acid binding protein (FABP) family. As to expression, abundant in the fluid surrounding the developing embryo of Ascaris suum.

May play a role in sequestering potentially toxic fatty acids and their peroxidation products, or it may be involved in the maintenance of the impermeable lipid layer of the eggshell. This chain is Fatty acid-binding protein homolog, found in Ascaris suum (Pig roundworm).